Here is a 289-residue protein sequence, read N- to C-terminus: Four and a half LIM domains protein 3 (289 aa).

S2 carries the post-translational modification N-acetylserine. The segment at 7–31 (CAKCNESLYGRKYIQTDSGPYCVPC) adopts a C4-type zinc-finger fold. LIM zinc-binding domains follow at residues 40 to 92 (CAEC…CNEC) and 101 to 153 (CSAC…CVPC). An N6-acetyllysine modification is found at K157. LIM zinc-binding domains follow at residues 162 to 212 (CARC…CVAC) and 221 to 275 (CSSC…FVPD). An N6-acetyllysine modification is found at K244.

As to quaternary structure, interacts with SOX15; the interaction recruits FHL3 to FOXK1 promoters where it acts as a transcriptional coactivator of FOXK1. Expressed in myogenic progenitor cells (at protein level). Expressed in skeletal striated muscle and the heart. Expressed to a lesser extent, in lung, and kidney. Expressed in skin and skeletal muscles such as the masseter, tongue, tibialis anterior and plantar muscles.

The protein localises to the nucleus. The protein resides in the cytoplasm. Its function is as follows. Recruited by SOX15 to FOXK1 promoters where it acts as a transcriptional coactivator of FOXK1. This chain is Four and a half LIM domains protein 3 (Fhl3), found in Mus musculus (Mouse).